We begin with the raw amino-acid sequence, 97 residues long: Cornifin (97 aa).

The segment at 1-42 (MSSQQQKQPCTPPPQPQQQQVKQPCQPPPQEPCVPKTKEPCH) is disordered. Position 2 is an N-acetylserine (Ser2). 9 consecutive repeat copies span residues 3–14 (SQQQKQPCTPPP), 18–29 (QQQVKQPCQPPP), 31–38 (EPCVPKTK), 39–46 (EPCHPKVP), 47–54 (EPCQPKVP), 55–62 (EPCQPKVP), 63–70 (EPCHPKVP), 71–78 (EPCQPKVP), and 79–85 (EPCPSPV). Residues 3–29 (SQQQKQPCTPPPQPQQQQVKQPCQPPP) are 2 X 12 AA approximate repeats. Residues 31 to 85 (EPCVPKTKEPCHPKVPEPCQPKVPEPCQPKVPEPCHPKVPEPCQPKVPEPCPSPV) are 7 X 8 AA approximate tandem repeats.

It belongs to the cornifin (SPRR) family. In terms of tissue distribution, not detected in normal lung tissue but seen in tumor tissues. Cells around the keratin pearls contain high levels.

It is found in the cytoplasm. Its function is as follows. Cross-linked envelope protein of keratinocytes. It is a keratinocyte protein that first appears in the cell cytosol, but ultimately becomes cross-linked to membrane proteins by transglutaminase. All that results in the formation of an insoluble envelope beneath the plasma membrane. The protein is Cornifin (SPRP) of Sus scrofa (Pig).